Consider the following 266-residue polypeptide: Phosphatidylglycerol--prolipoprotein diacylglyceryl transferase (266 aa).

Helical transmembrane passes span 14 to 34 (FGPLQIHWYGLMYLAGFAFFW), 55 to 75 (FLFYGALGVILGGRIGYILFY), 91 to 111 (WKGGMAFHGGLIGVMVAMWLF), and 117 to 137 (VSMFVVADFVAPMVPVGLFFG). An a 1,2-diacyl-sn-glycero-3-phospho-(1'-sn-glycerol)-binding site is contributed by arginine 138. 3 consecutive transmembrane segments (helical) span residues 172 to 192 (YPTQLLEALLEGIVLFIILMF), 201 to 221 (GAASGLFIGLYGLFRFYVEFF), and 235 to 255 (WVTMGQLLSLPMILIGFALVV).

This sequence belongs to the Lgt family.

Its subcellular location is the cell inner membrane. The catalysed reaction is L-cysteinyl-[prolipoprotein] + a 1,2-diacyl-sn-glycero-3-phospho-(1'-sn-glycerol) = an S-1,2-diacyl-sn-glyceryl-L-cysteinyl-[prolipoprotein] + sn-glycerol 1-phosphate + H(+). It functions in the pathway protein modification; lipoprotein biosynthesis (diacylglyceryl transfer). Catalyzes the transfer of the diacylglyceryl group from phosphatidylglycerol to the sulfhydryl group of the N-terminal cysteine of a prolipoprotein, the first step in the formation of mature lipoproteins. This is Phosphatidylglycerol--prolipoprotein diacylglyceryl transferase from Hydrogenovibrio crunogenus (strain DSM 25203 / XCL-2) (Thiomicrospira crunogena).